The chain runs to 30 residues: Glutathione S-transferase (30 aa).

It belongs to the GST superfamily. As to quaternary structure, monomer and homodimer.

Its subcellular location is the cytoplasm. It catalyses the reaction RX + glutathione = an S-substituted glutathione + a halide anion + H(+). In terms of biological role, conjugation of reduced glutathione to a wide number of exogenous and endogenous hydrophobic electrophiles. In Pseudomonas fluorescens, this protein is Glutathione S-transferase.